A 342-amino-acid chain; its full sequence is Protein pelota homolog (342 aa).

Belongs to the eukaryotic release factor 1 family. Pelota subfamily. Monomer. Requires a divalent metal cation as cofactor.

The protein localises to the cytoplasm. Functionally, may function in recognizing stalled ribosomes, interact with stem-loop structures in stalled mRNA molecules, and effect endonucleolytic cleavage of the mRNA. May play a role in the release non-functional ribosomes and degradation of damaged mRNAs. Has endoribonuclease activity. This is Protein pelota homolog from Methanocorpusculum labreanum (strain ATCC 43576 / DSM 4855 / Z).